A 377-amino-acid polypeptide reads, in one-letter code: Transmembrane 6 superfamily member 2 (377 aa).

The next 9 membrane-spanning stretches (helical) occupy residues 10 to 30, 34 to 54, 63 to 83, 111 to 131, 140 to 160, 170 to 190, 219 to 239, 269 to 289, and 332 to 352; these read IAALSLSALPVSYALNHVSAL, LWVALMSALILGLLFVAVYSL, PLYAVFAVFAFTSVVDLIIAL, FICYWDGTVHYLLYLAMAGAI, FGLYWLGSFAMSILVFLTGNI, PAFFLTIPYLLVPCWAGMKVF, LALVIYLILAGFFTLFRGLVV, MLMYMFYVLPFCGLAAYALTF, and TWGCFFVCNLLYALGPHLLAY. EXPERA domains follow at residues 61-186 and 217-351; these read YDPL…CWAG and ADLA…HLLA.

The protein belongs to the TM6SF family. In terms of tissue distribution, substantial expression in liver and intestine, whereas all other tissues analyzed show low levels.

Its subcellular location is the endoplasmic reticulum membrane. It localises to the endoplasmic reticulum-Golgi intermediate compartment membrane. Its function is as follows. Regulator of liver fat metabolism influencing triglyceride secretion and hepatic lipid droplet content. May function as sterol isomerase. This is Transmembrane 6 superfamily member 2 (TM6SF2) from Homo sapiens (Human).